We begin with the raw amino-acid sequence, 506 residues long: bZIP transcription factor TGA10 (506 aa).

Disordered regions lie at residues 22–50 and 113–218; these read VSYM…HQHH and PSSI…KTLR. 4 stretches are compositionally biased toward polar residues: residues 25–45, 113–124, 142–152, and 160–180; these read MDSS…SFGG, PSSIQEQRQNSG, PSTTNKMNTGL, and SKRS…NDAP. Positions 207–216 are enriched in basic and acidic residues; that stretch reads DAPKTPDPKT. In terms of domain architecture, bZIP spans 213-257; it reads DPKTLRRLAQNREAARKSRLRKKAYVQQLESSRIRLTQLEQELQR. Positions 215–235 are basic motif; the sequence is KTLRRLAQNREAARKSRLRKK. The Nuclear localization signal signature appears at 217–224; the sequence is LRRLAQNR. The segment at 241–255 is leucine-zipper; the sequence is LESSRIRLTQLEQEL. In terms of domain architecture, DOG1 spans 288 to 502; that stretch reads AAVFDMEYAR…RALSSLWHAR (215 aa).

It belongs to the bZIP family. As to quaternary structure, binds DNA as a dimer. Interacts with TGA2.2. As to expression, specifically expressed in roots.

It localises to the nucleus. Its function is as follows. Transcription activator that binds to as1-like elements (5'-TGACGTAAgggaTGACGCA-3') in promoters of target genes. Regulates transcription in response to plant signaling molecules salicylic acid (SA), methyl jasmonate (MJ) and auxin (2,4D) only in leaves. Prevents lateral branching and may repress defense signaling. This chain is bZIP transcription factor TGA10, found in Nicotiana tabacum (Common tobacco).